Reading from the N-terminus, the 109-residue chain is Putative double-stranded DNA mimic protein YciU (109 aa).

It belongs to the putative dsDNA mimic protein family.

In terms of biological role, may act as a double-stranded DNA (dsDNA) mimic. Probably regulates the activity of a dsDNA-binding protein. This Shigella boydii serotype 18 (strain CDC 3083-94 / BS512) protein is Putative double-stranded DNA mimic protein YciU.